A 75-amino-acid chain; its full sequence is DNA-directed RNA polymerase subunit omega (75 aa).

The protein belongs to the RNA polymerase subunit omega family. In terms of assembly, in cyanobacteria the RNAP catalytic core is composed of 2 alpha, 1 beta, 1 beta', 1 gamma and 1 omega subunit. When a sigma factor is associated with the core the holoenzyme is formed, which can initiate transcription.

It carries out the reaction RNA(n) + a ribonucleoside 5'-triphosphate = RNA(n+1) + diphosphate. Its function is as follows. Promotes RNA polymerase assembly. Latches the N- and C-terminal regions of the beta' subunit thereby facilitating its interaction with the beta and alpha subunits. The polypeptide is DNA-directed RNA polymerase subunit omega (Picosynechococcus sp. (strain ATCC 27264 / PCC 7002 / PR-6) (Agmenellum quadruplicatum)).